The following is a 201-amino-acid chain: Dephospho-CoA kinase (201 aa).

Positions 10-201 constitute a DPCK domain; sequence LIGLTGGIAT…PQIIKAWHHR (192 aa). 18-23 contacts ATP; sequence ATGKST.

This sequence belongs to the CoaE family.

It localises to the cytoplasm. It catalyses the reaction 3'-dephospho-CoA + ATP = ADP + CoA + H(+). Its pathway is cofactor biosynthesis; coenzyme A biosynthesis; CoA from (R)-pantothenate: step 5/5. Catalyzes the phosphorylation of the 3'-hydroxyl group of dephosphocoenzyme A to form coenzyme A. The chain is Dephospho-CoA kinase from Synechocystis sp. (strain ATCC 27184 / PCC 6803 / Kazusa).